The primary structure comprises 407 residues: Putative glycosyltransferase YtcC (407 aa).

This sequence belongs to the glycosyltransferase group 1 family. Glycosyltransferase 4 subfamily.

The polypeptide is Putative glycosyltransferase YtcC (ytcC) (Bacillus subtilis (strain 168)).